The chain runs to 744 residues: Phosphoribosylformylglycinamidine synthase subunit PurL (744 aa).

H50 is a catalytic residue. Positions 53 and 92 each coordinate ATP. Mg(2+) is bound at residue E94. Substrate is bound by residues 95–98 (SHNH) and R117. H96 (proton acceptor) is an active-site residue. Position 118 (D118) interacts with Mg(2+). Position 241 (Q241) interacts with substrate. D269 serves as a coordination point for Mg(2+). Substrate is bound at residue 313 to 315 (ESQ). Residues D495 and G532 each coordinate ATP. Residue N533 participates in Mg(2+) binding. S535 is a substrate binding site.

This sequence belongs to the FGAMS family. Monomer. Part of the FGAM synthase complex composed of 1 PurL, 1 PurQ and 2 PurS subunits.

The protein resides in the cytoplasm. The enzyme catalyses N(2)-formyl-N(1)-(5-phospho-beta-D-ribosyl)glycinamide + L-glutamine + ATP + H2O = 2-formamido-N(1)-(5-O-phospho-beta-D-ribosyl)acetamidine + L-glutamate + ADP + phosphate + H(+). It functions in the pathway purine metabolism; IMP biosynthesis via de novo pathway; 5-amino-1-(5-phospho-D-ribosyl)imidazole from N(2)-formyl-N(1)-(5-phospho-D-ribosyl)glycinamide: step 1/2. In terms of biological role, part of the phosphoribosylformylglycinamidine synthase complex involved in the purines biosynthetic pathway. Catalyzes the ATP-dependent conversion of formylglycinamide ribonucleotide (FGAR) and glutamine to yield formylglycinamidine ribonucleotide (FGAM) and glutamate. The FGAM synthase complex is composed of three subunits. PurQ produces an ammonia molecule by converting glutamine to glutamate. PurL transfers the ammonia molecule to FGAR to form FGAM in an ATP-dependent manner. PurS interacts with PurQ and PurL and is thought to assist in the transfer of the ammonia molecule from PurQ to PurL. This is Phosphoribosylformylglycinamidine synthase subunit PurL from Rhizobium johnstonii (strain DSM 114642 / LMG 32736 / 3841) (Rhizobium leguminosarum bv. viciae).